The following is a 216-amino-acid chain: 3-isopropylmalate dehydratase small subunit (216 aa).

Belongs to the LeuD family. LeuD type 1 subfamily. In terms of assembly, heterodimer of LeuC and LeuD.

It carries out the reaction (2R,3S)-3-isopropylmalate = (2S)-2-isopropylmalate. Its pathway is amino-acid biosynthesis; L-leucine biosynthesis; L-leucine from 3-methyl-2-oxobutanoate: step 2/4. Catalyzes the isomerization between 2-isopropylmalate and 3-isopropylmalate, via the formation of 2-isopropylmaleate. This is 3-isopropylmalate dehydratase small subunit from Albidiferax ferrireducens (strain ATCC BAA-621 / DSM 15236 / T118) (Rhodoferax ferrireducens).